The chain runs to 402 residues: Multidrug resistance protein MdtH (402 aa).

Helical transmembrane passes span 13 to 33 (YFLLVDNMLVVLGFFVVFPLI), 34 to 54 (SIRFVDQMGWAALMVGIALGL), 99 to 116 (PWVLWLSCILSGLGGTLF), 139 to 159 (LLMMQDSAGAVIGALLGSWLL), 165 to 185 (LVCSAGAALFIACAAFNAWYL), 214 to 234 (VLTLTGYYMLAVQVMLMLPIM), 243 to 263 (AAVKWMYAIEATISLTLLYPI), 277 to 297 (LMAGLLVMTLAMLPIGMTSSL), 300 to 320 (LFTLICLFYIGSIIAEPARET), 340 to 360 (LGLAFGGALGYAGGGWLFDAG), and 368 to 388 (LPWLMLGAIGFITFLALWWQF).

It belongs to the major facilitator superfamily. DHA1 family. MdtH (TC 2.A.1.2.21) subfamily.

It localises to the cell inner membrane. In Klebsiella pneumoniae (strain 342), this protein is Multidrug resistance protein MdtH.